The sequence spans 435 residues: Serine--tRNA ligase (435 aa).

242–244 provides a ligand contact to L-serine; it reads TAE. An ATP-binding site is contributed by 273–275; it reads RSE. An L-serine-binding site is contributed by E296. 360-363 contacts ATP; sequence EISS. S396 is an L-serine binding site.

This sequence belongs to the class-II aminoacyl-tRNA synthetase family. Type-1 seryl-tRNA synthetase subfamily. Homodimer. The tRNA molecule binds across the dimer.

It is found in the cytoplasm. It carries out the reaction tRNA(Ser) + L-serine + ATP = L-seryl-tRNA(Ser) + AMP + diphosphate + H(+). The enzyme catalyses tRNA(Sec) + L-serine + ATP = L-seryl-tRNA(Sec) + AMP + diphosphate + H(+). Its pathway is aminoacyl-tRNA biosynthesis; selenocysteinyl-tRNA(Sec) biosynthesis; L-seryl-tRNA(Sec) from L-serine and tRNA(Sec): step 1/1. Functionally, catalyzes the attachment of serine to tRNA(Ser). Is also able to aminoacylate tRNA(Sec) with serine, to form the misacylated tRNA L-seryl-tRNA(Sec), which will be further converted into selenocysteinyl-tRNA(Sec). In Vibrio cholerae serotype O1 (strain ATCC 39541 / Classical Ogawa 395 / O395), this protein is Serine--tRNA ligase.